A 249-amino-acid polypeptide reads, in one-letter code: DNA polymerase sliding clamp (249 aa).

This sequence belongs to the PCNA family. In terms of assembly, homotrimer. The subunits circularize to form a toroid; DNA passes through its center. Replication factor C (RFC) is required to load the toroid on the DNA.

Functionally, sliding clamp subunit that acts as a moving platform for DNA processing. Responsible for tethering the catalytic subunit of DNA polymerase and other proteins to DNA during high-speed replication. The chain is DNA polymerase sliding clamp from Nanoarchaeum equitans (strain Kin4-M).